Reading from the N-terminus, the 528-residue chain is Na(+)/H(+) antiporter NhaB (528 aa).

A run of 11 helical transmembrane segments spans residues 23-43, 45-65, 90-110, 136-156, 204-224, 237-257, 305-325, 350-370, 392-412, 450-470, and 479-499; these read VAII…NPFV, GWLL…CYPL, LVAN…IYFM, CFAA…AVVI, LLMH…VGEP, FGEF…CGLI, GIIA…VGLI, EEAL…AVII, LALF…VFVG, ATPN…APLI, and VMAL…IMFF.

Belongs to the NhaB Na(+)/H(+) (TC 2.A.34) antiporter family.

It is found in the cell inner membrane. The enzyme catalyses 2 Na(+)(in) + 3 H(+)(out) = 2 Na(+)(out) + 3 H(+)(in). Na(+)/H(+) antiporter that extrudes sodium in exchange for external protons. Can also transport lithium and potassium. The sequence is that of Na(+)/H(+) antiporter NhaB from Vibrio parahaemolyticus serotype O3:K6 (strain RIMD 2210633).